A 181-amino-acid polypeptide reads, in one-letter code: Ribosome maturation factor RimP (181 aa).

This sequence belongs to the RimP family.

It is found in the cytoplasm. Required for maturation of 30S ribosomal subunits. The chain is Ribosome maturation factor RimP from Mycolicibacterium smegmatis (strain ATCC 700084 / mc(2)155) (Mycobacterium smegmatis).